A 72-amino-acid polypeptide reads, in one-letter code: Protein kish-A (72 aa).

Residues 1–26 (MSAIFNFQSLLTVILLLICTCAYIRS) form the signal peptide. Topologically, residues 27–53 (LAPSILDRNKTGLLGIFWKCARIGERK) are extracellular. N-linked (GlcNAc...) asparagine glycosylation is present at Asn35. The helical transmembrane segment at 54 to 71 (SPYVAICCIVMAFSILFI) threads the bilayer. Position 72 (Gln72) is a topological domain, cytoplasmic.

The protein belongs to the KISH family.

It is found in the golgi apparatus membrane. Involved in the early part of the secretory pathway. The chain is Protein kish-A (Tmem167a) from Mus musculus (Mouse).